The following is a 55-amino-acid chain: Neurotoxin X-29S (55 aa).

A signal peptide spans 1-23 (MKIFFAVLVILVLFSMLIWTAYG). 3 disulfide bridges follow: Cys-30–Cys-45, Cys-36–Cys-50, and Cys-39–Cys-53.

Expressed by the venom gland.

It is found in the secreted. The sequence is that of Neurotoxin X-29S from Olivierus martensii (Manchurian scorpion).